Consider the following 249-residue polypeptide: 5'-nucleotidase SurE (249 aa).

A divalent metal cation is bound by residues Asp8, Asp9, Ser39, and Asn91.

It belongs to the SurE nucleotidase family. A divalent metal cation is required as a cofactor.

It is found in the cytoplasm. It carries out the reaction a ribonucleoside 5'-phosphate + H2O = a ribonucleoside + phosphate. Its function is as follows. Nucleotidase that shows phosphatase activity on nucleoside 5'-monophosphates. The protein is 5'-nucleotidase SurE of Pseudomonas entomophila (strain L48).